The primary structure comprises 119 residues: Large ribosomal subunit protein bL20 (119 aa).

This sequence belongs to the bacterial ribosomal protein bL20 family.

Its function is as follows. Binds directly to 23S ribosomal RNA and is necessary for the in vitro assembly process of the 50S ribosomal subunit. It is not involved in the protein synthesizing functions of that subunit. This is Large ribosomal subunit protein bL20 from Colwellia psychrerythraea (strain 34H / ATCC BAA-681) (Vibrio psychroerythus).